Reading from the N-terminus, the 319-residue chain is Protein quaking-B (319 aa).

The 67-residue stretch at Tyr87–Val153 folds into the KH domain. An SH3-binding motif is present at residues Pro276 to Pro279.

Belongs to the quaking family. In terms of assembly, homodimer; does not require RNA to homodimerize.

Its subcellular location is the cytoplasm. It localises to the nucleus. Its function is as follows. RNA reader protein, which recognizes and binds specific RNAs, thereby regulating RNA metabolic processes, such as pre-mRNA splicing, circular RNA (circRNA) formation, mRNA export, mRNA stability and/or translation. Involved in various cellular processes, such as mRNA storage into stress granules, apoptosis, interferon response, glial cell fate and development. Binds to the 5'-NACUAAY-N(1,20)-UAAY-3' RNA core sequence. Acts as a mRNA modification reader that specifically recognizes and binds mRNA transcripts modified by internal N(7)-methylguanine (m7G). Promotes the formation of circular RNAs (circRNAs): acts by binding to sites flanking circRNA-forming exons. CircRNAs are produced by back-splicing circularization of pre-mRNAs. Required to protect and promote stability of mRNAs which promotes oligodendrocyte differentiation. Acts as an important regulator of muscle development: required during early skeletal myofibril formation by regulating the accumulation of the muscle-specific tropomyosin-3 (tpm3) transcripts. The polypeptide is Protein quaking-B (qki2) (Danio rerio (Zebrafish)).